The following is a 783-amino-acid chain: Metabotropic glutamate receptor-like protein J (783 aa).

A signal peptide spans 1 to 20; the sequence is MKILLYIAIILSFFSLITIS. Residues 21-383 lie on the Extracellular side of the membrane; it reads SECKIAVLLS…DYPNSLKYGV (363 aa). Residues 56-85 are a coiled coil; sequence DFSIYYENLEESMEEAEKAFQDALHKGANL. Asn181, Asn196, Asn256, Asn282, and Asn315 each carry an N-linked (GlcNAc...) asparagine glycan. The chain crosses the membrane as a helical span at residues 384–404; it reads TIVSGVCIFICLVCMTLVVVF. The Cytoplasmic segment spans residues 405-415; the sequence is KKARVIKSSSP. The chain crosses the membrane as a helical span at residues 416-436; the sequence is AFLLLILLGCCIIFAACILFA. Residues 437-443 are Extracellular-facing; sequence QSPTNQT. The N-linked (GlcNAc...) asparagine glycan is linked to Asn441. Residues 444-464 traverse the membrane as a helical segment; it reads CSARIWLLSLGYTLFLGNLLV. Over 465–489 the chain is Cytoplasmic; sequence KNWRIWLLFDNPKLKKRAITNWKLY. Residues 490-510 traverse the membrane as a helical segment; it reads PWVFAILAIDVMILAIWQGLG. Topologically, residues 511-538 are extracellular; that stretch reads NINAESRIGYDSLTQYQYKNVCSSDDQG. A helical transmembrane segment spans residues 539 to 559; sequence SIALYLLLVFHGLVLLVACFI. The Cytoplasmic segment spans residues 560–575; that stretch reads SFKIKVVDIEEFNESK. Residues 576 to 596 form a helical membrane-spanning segment; the sequence is PITTSVYIITFCLFIVIPLMV. Residues 597–604 are Extracellular-facing; the sequence is SPQSLTSQ. Residues 605-625 form a helical membrane-spanning segment; the sequence is TTIICVCAIVTTLISMLLLFG. Residues 626-783 are Cytoplasmic-facing; it reads SKFYKMATQG…GETEIDSNNV (158 aa). A compositionally biased stretch (low complexity) spans 647–656; that stretch reads KSSSKSSKSS. Disordered stretches follow at residues 647–696 and 731–783; these read KSSS…FSNK and QLQQ…SNNV. The segment covering 670–679 has biased composition (acidic residues); that stretch reads GEDDTSDETS. The segment covering 763–783 has biased composition (polar residues); that stretch reads VLSKRISNQQNGETEIDSNNV.

This sequence in the N-terminal section; belongs to the BMP lipoprotein family. In the C-terminal section; belongs to the G-protein coupled receptor 3 family. GABA-B receptor subfamily.

Its subcellular location is the cell membrane. The protein localises to the membrane. It is found in the endoplasmic reticulum membrane. It localises to the golgi apparatus membrane. The protein resides in the nucleus envelope. Functionally, may act during the development and be a negative regulator. The protein is Metabotropic glutamate receptor-like protein J (grlJ) of Dictyostelium discoideum (Social amoeba).